We begin with the raw amino-acid sequence, 121 residues long: Large ribosomal subunit protein uL14 (121 aa).

It belongs to the universal ribosomal protein uL14 family. In terms of assembly, part of the 50S ribosomal subunit. Forms a cluster with proteins L3 and L19. In the 70S ribosome, L14 and L19 interact and together make contacts with the 16S rRNA in bridges B5 and B8.

In terms of biological role, binds to 23S rRNA. Forms part of two intersubunit bridges in the 70S ribosome. The polypeptide is Large ribosomal subunit protein uL14 (Azobacteroides pseudotrichonymphae genomovar. CFP2).